The sequence spans 212 residues: ATP-dependent Clp protease proteolytic subunit 2 (212 aa).

Positions 1–20 (MSHNTSIASQGMPAMAGPET) are disordered. The active-site Nucleophile is Ser107. Residue His132 is part of the active site.

This sequence belongs to the peptidase S14 family. In terms of assembly, fourteen ClpP subunits assemble into 2 heptameric rings which stack back to back to give a disk-like structure with a central cavity, resembling the structure of eukaryotic proteasomes.

It localises to the cytoplasm. The catalysed reaction is Hydrolysis of proteins to small peptides in the presence of ATP and magnesium. alpha-casein is the usual test substrate. In the absence of ATP, only oligopeptides shorter than five residues are hydrolyzed (such as succinyl-Leu-Tyr-|-NHMec, and Leu-Tyr-Leu-|-Tyr-Trp, in which cleavage of the -Tyr-|-Leu- and -Tyr-|-Trp bonds also occurs).. In terms of biological role, cleaves peptides in various proteins in a process that requires ATP hydrolysis. Has a chymotrypsin-like activity. Plays a major role in the degradation of misfolded proteins. In Cutibacterium acnes (strain DSM 16379 / KPA171202) (Propionibacterium acnes), this protein is ATP-dependent Clp protease proteolytic subunit 2.